Consider the following 515-residue polypeptide: Cytochrome P450 1A1 (515 aa).

Residue phenylalanine 225 coordinates substrate. Cysteine 459 is a binding site for heme.

This sequence belongs to the cytochrome P450 family. Requires heme as cofactor.

The protein localises to the endoplasmic reticulum membrane. Its subcellular location is the microsome membrane. The enzyme catalyses an organic molecule + reduced [NADPH--hemoprotein reductase] + O2 = an alcohol + oxidized [NADPH--hemoprotein reductase] + H2O + H(+). Functionally, cytochromes P450 are a group of heme-thiolate monooxygenases. They oxidize a variety of structurally unrelated compounds, including steroids, fatty acids, and xenobiotics. In Microgadus tomcod (Atlantic tomcod), this protein is Cytochrome P450 1A1 (cyp1a1).